Reading from the N-terminus, the 62-residue chain is Photosystem II reaction center protein Z (62 aa).

Helical transmembrane passes span 8–28 (AVFA…VVFA) and 41–61 (FSGT…NSLI).

Belongs to the PsbZ family. PSII is composed of 1 copy each of membrane proteins PsbA, PsbB, PsbC, PsbD, PsbE, PsbF, PsbH, PsbI, PsbJ, PsbK, PsbL, PsbM, PsbT, PsbY, PsbZ, Psb30/Ycf12, at least 3 peripheral proteins of the oxygen-evolving complex and a large number of cofactors. It forms dimeric complexes.

The protein resides in the plastid. Its subcellular location is the chloroplast thylakoid membrane. In terms of biological role, may control the interaction of photosystem II (PSII) cores with the light-harvesting antenna, regulates electron flow through the 2 photosystem reaction centers. PSII is a light-driven water plastoquinone oxidoreductase, using light energy to abstract electrons from H(2)O, generating a proton gradient subsequently used for ATP formation. The sequence is that of Photosystem II reaction center protein Z from Daucus carota (Wild carrot).